The following is a 151-amino-acid chain: ALK and LTK ligand 2 (151 aa).

Residues 1-25 (MRVSGRPMLLALLLLLSTVGDRGRA) form the signal peptide. Intrachain disulfides connect Cys-112–Cys-148 and Cys-126–Cys-135.

This sequence belongs to the ALKAL family. Homodimer.

The protein resides in the secreted. Its subcellular location is the cell membrane. Cytokine that acts as a physiological ligand for receptor tyrosine kinases LTK and ALK, leading to their activation. Cytokine-binding is sufficient to activate LTK. In contrast, ALKAL2-driven activation of ALK is coupled with heparin-binding to ALK. Stimulation of ALK signaling is involved in neural development and regulation of energy expenditure. This is ALK and LTK ligand 2 from Mus musculus (Mouse).